Here is a 304-residue protein sequence, read N- to C-terminus: Insulin-like growth factor-binding protein 2 (304 aa).

The first 34 residues, 1–34, serve as a signal peptide directing secretion; sequence MLPRLGGPALPLLLPSLLLLLLLGAGGCGPGVRA. One can recognise an IGFBP N-terminal domain in the interval 36-118; sequence VLFRCPPCTP…VTGAGTCEKR (83 aa). 9 disulfide bridges follow: Cys-40/Cys-68, Cys-43/Cys-70, Cys-51/Cys-71, Cys-59/Cys-74, Cys-82/Cys-95, Cys-89/Cys-115, Cys-206/Cys-240, Cys-251/Cys-262, and Cys-264/Cys-285. In terms of domain architecture, Thyroglobulin type-1 spans 203–285; the sequence is RTPCQQELDQ…APTIRGDPEC (83 aa). Residues 280-282 carry the Cell attachment site motif; that stretch reads RGD.

As to quaternary structure, interacts with IGF1. Interacts with IGF2. Interacts (via RGD motif) with integrin alpha5/ITGA5; this interaction induces cell migration, adhesion or apoptosis according to the context. Interacts with PTPRB; this interaction leads to PTPRB dimerization and inactivation. Post-translationally, cleaved by MMP9 leading to release of free IGF2 from IGFBP2-IGF2 complex, which contributes to enhance the motility and the growth of astrocytes. O-glycosylated. In adults, expressed in brain, testes, ovaries, and kidney. Expression in the adult liver is barely detectable.

The protein localises to the secreted. In terms of biological role, multifunctional protein that plays a critical role in regulating the availability of IGFs such as IGF1 and IGF2 to their receptors and thereby regulates IGF-mediated cellular processes including proliferation, differentiation, and apoptosis in a cell-type specific manner. Functions coordinately with receptor protein tyrosine phosphatase beta/PTPRB and the IGF1 receptor to regulate IGF1-mediated signaling by stimulating the phosphorylation of PTEN leading to its inactivation and AKT1 activation. Plays a positive role in cell migration via interaction with integrin alpha5/ITGA5 through an RGD motif. Additionally, interaction with ITGA5/ITGB1 enhances the adhesion of endothelial progenitor cells to endothelial cells. Upon mitochondrial damage, facilitates apoptosis with ITGA5 of podocytes, and then activates the phosphorylation of focal adhesion kinase (FAK)-mediated mitochondrial injury. The chain is Insulin-like growth factor-binding protein 2 (Igfbp2) from Rattus norvegicus (Rat).